The primary structure comprises 1199 residues: Chromosome partition protein Smc (1199 aa).

32–39 is an ATP binding site; it reads PNGSGKSN. Residues 192–528 adopt a coiled-coil conformation; it reads GVAEFDEKSE…NARIKTLKDM (337 aa). One can recognise an SMC hinge domain in the interval 546–658; that stretch reads PGVVDIAGNL…VDNLENAKKL (113 aa). A coiled-coil region spans residues 691-1051; that stretch reads IKVDIDMKKL…YLQLISEVQK (361 aa).

The protein belongs to the SMC family. In terms of assembly, homodimer.

It localises to the cytoplasm. In terms of biological role, required for chromosome condensation and partitioning. In Methanococcus voltae, this protein is Chromosome partition protein Smc.